Reading from the N-terminus, the 358-residue chain is Malate dehydrogenase 2, glyoxysomal (358 aa).

The N-terminal 38 residues, 1–38 (MEFRGDANKRIAMISAHLQPSFTPQMEAKNSVMGRENC), are a transit peptide targeting the glyoxysome. Residues 53 to 59 (GAAGGIG) and D79 each bind NAD(+). Substrate contacts are provided by R126 and R132. NAD(+)-binding positions include N139 and 162–164 (ISN). Residues N164 and R198 each coordinate substrate. H222 functions as the Proton acceptor in the catalytic mechanism. M273 provides a ligand contact to NAD(+).

The protein belongs to the LDH/MDH superfamily. MDH type 1 family. Homodimer.

The protein resides in the glyoxysome. It catalyses the reaction (S)-malate + NAD(+) = oxaloacetate + NADH + H(+). This is Malate dehydrogenase 2, glyoxysomal (MDH2) from Brassica napus (Rape).